A 775-amino-acid polypeptide reads, in one-letter code: Meiotic driver SPOK2 (775 aa).

Residues 4–69 are a coiled coil; that stretch reads KDRIAQLLRE…RCERERLQLE (66 aa). 4 disordered regions span residues 18-51, 211-249, 442-525, and 734-761; these read KARE…REEE, QKDD…YICS, LSSA…AMAD, and PPPK…AQLF. Polar residues predominate over residues 444–457; that stretch reads SAPSSQNTDISEYT.

The protein resides in the cytoplasm. It localises to the nucleus. Functionally, promotes unequal transmission of alleles from the parental zygote to progeny spores by acting as poison/antidote system, leading to poisoning of progeny that do not inherit the allele. May possess DNA nuclease activity that leads to spore killing, and a kinase activity that confers resistance to the nuclease activity. The sequence is that of Meiotic driver SPOK2 from Podospora anserina (strain S / ATCC MYA-4624 / DSM 980 / FGSC 10383) (Pleurage anserina).